Consider the following 2472-residue polypeptide: Spectrin alpha chain, non-erythrocytic 1 (2472 aa).

At Met1 the chain carries N-acetylmethionine. 9 Spectrin repeats span residues 45–146 (RFQF…IKLL), 150–251 (KLVQ…QGKL), 256–358 (EVQR…ARLN), 361–465 (YRLQ…QYEQ), 468–570 (DLQL…AQLA), 574–676 (HLQQ…KLRE), 679–781 (QQQQ…QKLA), 785–888 (RLQQ…DLED), and 891–969 (QAQQ…ETGK). The residue at position 587 (Ser587) is a Phosphoserine. Lys637 bears the N6-acetyllysine mark. Lys803 carries the N6-acetyllysine modification. Ser924, Ser982, Ser999, Ser1029, Ser1031, and Ser1041 each carry phosphoserine. The SH3 domain occupies 967-1026 (TGKELVLALYDYQEKSPREVTMKKGDILTLLNSTNKDWWKVEVNDRQGFVPAAYVKKLDP). Residues 1096 to 1166 (LFREANELQQ…LESEGLMAEE (71 aa)) form a Spectrin 10 repeat. Residue Tyr1176 is modified to Phosphotyrosine. Phosphoserine is present on residues Ser1190, Ser1207, Ser1217, Ser1291, Ser1306, Ser1323, and Ser1338. The Spectrin 11 repeat unit spans residues 1233–1336 (HEVQRFHRDA…RADQRKAKLG (104 aa)). Spectrin repeat units lie at residues 1339–1442 (HDLQ…MMLD) and 1446–1549 (ELQL…KLGE). Lys1519 carries the N6-acetyllysine modification. Phosphoserine occurs at positions 1550, 1557, 1578, 1615, and 1647. Spectrin repeat units lie at residues 1552-1656 (TLQQ…KLKE), 1659-1762 (KQQN…KLNE), 1764-1868 (HRLH…RLEE), 1871-1974 (EYQQ…KLDE), 1978-2081 (FLQF…KLLE), 2092-2194 (LFLT…LELQ), and 2206-2310 (LRQE…NLEQ). Residue Thr2020 is modified to Phosphothreonine. Lys2052 bears the N6-acetyllysine mark. EF-hand domains lie at 2323–2358 (EALK…LGYD), 2366–2401 (EPDP…RETE), and 2404–2439 (KSSE…EQAD). Residues Asp2336, Asp2338, Ser2340, Arg2342, Glu2347, Asp2379, Asn2381, Asp2383, His2385, and Glu2390 each contribute to the Ca(2+) site. Lys2421 carries the post-translational modification N6-acetyllysine.

Belongs to the spectrin family. Like erythrocyte spectrin, the spectrin-like proteins are capable of forming dimers which can further associate to tetramers. Interacts (via C-terminal spectrin repeats) with TRPC4. Interacts with CALM and EMD. Interacts with isoform 1 of ACP1. Identified in a complex with ACTN4, CASK, IQGAP1, MAGI2, NPHS1 and SPTBN1. Interacts with SHANK3 (via ANK repeats). Interacts with CLN3; this interaction regulates the fodrin localization at the plasma membrane. In terms of processing, phosphorylation of Tyr-1176 decreases sensitivity to cleavage by calpain in vitro.

Its subcellular location is the cytoplasm. The protein resides in the cytoskeleton. It is found in the cell cortex. Fodrin, which seems to be involved in secretion, interacts with calmodulin in a calcium-dependent manner and is thus candidate for the calcium-dependent movement of the cytoskeleton at the membrane. The chain is Spectrin alpha chain, non-erythrocytic 1 (SPTAN1) from Homo sapiens (Human).